The following is a 154-amino-acid chain: Ribosome maturation factor RimP (154 aa).

The protein belongs to the RimP family.

The protein resides in the cytoplasm. In terms of biological role, required for maturation of 30S ribosomal subunits. This is Ribosome maturation factor RimP from Alkaliphilus oremlandii (strain OhILAs) (Clostridium oremlandii (strain OhILAs)).